The following is a 428-amino-acid chain: Dihydroorotase (428 aa).

Residues histidine 59 and histidine 61 each contribute to the Zn(2+) site. Substrate-binding positions include 61–63 (HLR) and asparagine 93. Zn(2+) contacts are provided by aspartate 151, histidine 178, and histidine 231. Asparagine 277 lines the substrate pocket. Aspartate 304 is a Zn(2+) binding site. The active site involves aspartate 304. Residues histidine 308 and 322 to 323 (FG) contribute to the substrate site.

Belongs to the metallo-dependent hydrolases superfamily. DHOase family. Class I DHOase subfamily. The cofactor is Zn(2+).

It carries out the reaction (S)-dihydroorotate + H2O = N-carbamoyl-L-aspartate + H(+). It functions in the pathway pyrimidine metabolism; UMP biosynthesis via de novo pathway; (S)-dihydroorotate from bicarbonate: step 3/3. Functionally, catalyzes the reversible cyclization of carbamoyl aspartate to dihydroorotate. The chain is Dihydroorotase from Bacillus anthracis (strain A0248).